Reading from the N-terminus, the 622-residue chain is Chaperone protein HscA homolog (622 aa).

Belongs to the heat shock protein 70 family.

Chaperone involved in the maturation of iron-sulfur cluster-containing proteins. Has a low intrinsic ATPase activity which is markedly stimulated by HscB. In Burkholderia cenocepacia (strain ATCC BAA-245 / DSM 16553 / LMG 16656 / NCTC 13227 / J2315 / CF5610) (Burkholderia cepacia (strain J2315)), this protein is Chaperone protein HscA homolog.